A 186-amino-acid polypeptide reads, in one-letter code: Peptidyl-tRNA hydrolase (186 aa).

Residue Tyr13 participates in tRNA binding. His18 serves as the catalytic Proton acceptor. Positions 59, 61, and 107 each coordinate tRNA.

This sequence belongs to the PTH family. Monomer.

It is found in the cytoplasm. The catalysed reaction is an N-acyl-L-alpha-aminoacyl-tRNA + H2O = an N-acyl-L-amino acid + a tRNA + H(+). Its function is as follows. Hydrolyzes ribosome-free peptidyl-tRNAs (with 1 or more amino acids incorporated), which drop off the ribosome during protein synthesis, or as a result of ribosome stalling. In terms of biological role, catalyzes the release of premature peptidyl moieties from peptidyl-tRNA molecules trapped in stalled 50S ribosomal subunits, and thus maintains levels of free tRNAs and 50S ribosomes. The polypeptide is Peptidyl-tRNA hydrolase (Thermotoga sp. (strain RQ2)).